Consider the following 335-residue polypeptide: Biotin synthase (335 aa).

Residues 46-274 (YDIQLASLFS…ESKIRLSAGR (229 aa)) form the Radical SAM core domain. Residues cysteine 61, cysteine 65, and cysteine 68 each coordinate [4Fe-4S] cluster. The [2Fe-2S] cluster site is built by cysteine 105, cysteine 137, cysteine 197, and arginine 269.

Belongs to the radical SAM superfamily. Biotin synthase family. In terms of assembly, homodimer. It depends on [4Fe-4S] cluster as a cofactor. [2Fe-2S] cluster is required as a cofactor.

It carries out the reaction (4R,5S)-dethiobiotin + (sulfur carrier)-SH + 2 reduced [2Fe-2S]-[ferredoxin] + 2 S-adenosyl-L-methionine = (sulfur carrier)-H + biotin + 2 5'-deoxyadenosine + 2 L-methionine + 2 oxidized [2Fe-2S]-[ferredoxin]. It functions in the pathway cofactor biosynthesis; biotin biosynthesis; biotin from 7,8-diaminononanoate: step 2/2. In terms of biological role, catalyzes the conversion of dethiobiotin (DTB) to biotin by the insertion of a sulfur atom into dethiobiotin via a radical-based mechanism. This is Biotin synthase from Prochlorococcus marinus (strain MIT 9301).